The chain runs to 308 residues: GDP-L-colitose synthase (308 aa).

NADP(+) is bound by residues 7–13 (GAGGMVG) and 101–104 (LGSS). The active-site Proton donor/acceptor is tyrosine 132. Residues lysine 136, 160 to 163 (PCNL), and histidine 176 contribute to the NADP(+) site. Residues lysine 184, tryptophan 199, and arginine 206 each contribute to the substrate site.

The protein belongs to the NAD(P)-dependent epimerase/dehydratase family. Fucose synthase subfamily. Homodimer.

It catalyses the reaction GDP-beta-L-colitose + NAD(+) = GDP-4-dehydro-3,6-dideoxy-alpha-D-mannose + NADH + H(+). The catalysed reaction is GDP-beta-L-colitose + NADP(+) = GDP-4-dehydro-3,6-dideoxy-alpha-D-mannose + NADPH + H(+). It functions in the pathway nucleotide-sugar metabolism; GDP-L-colitose biosynthesis. In terms of biological role, involved in the biosynthesis of the L-colitose (3,6-dideoxyl-L-xylo-hexose) present in the O-antigen region of lipopolysaccharides (LPS) where it serves as antigenic determinant and are vital for bacterial defense and survival. Catalyzes the two-step NADP-dependent conversion of GDP-4-keto-3,6-dideoxy-D-mannose to GDP-L-colitose. ColC is a bifunctional enzyme catalyzing the C-5 epimerization of GDP-4-keto-3,6-dideoxy-D-mannose and the subsequent C-4 keto reduction of the resulting L-epimer to give GDP-L-colitose. It can use both NADP(+) and NAD(+) as electron acceptor, with a slight preference for NADP(+). The chain is GDP-L-colitose synthase from Yersinia pseudotuberculosis.